Here is a 515-residue protein sequence, read N- to C-terminus: Carboxyl-terminal-processing peptidase 2, chloroplastic (515 aa).

One can recognise a PDZ domain in the interval F198 to G286. Catalysis depends on charge relay system residues S417 and K442.

It belongs to the peptidase S41A family.

It is found in the plastid. It localises to the chloroplast thylakoid lumen. It carries out the reaction The enzyme shows specific recognition of a C-terminal tripeptide, Xaa-Yaa-Zaa, in which Xaa is preferably Ala or Leu, Yaa is preferably Ala or Tyr, and Zaa is preferably Ala, but then cleaves at a variable distance from the C-terminus. A typical cleavage is -Ala-Ala-|-Arg-Ala-Ala-Lys-Glu-Asn-Tyr-Ala-Leu-Ala-Ala.. In terms of biological role, protease involved in the C-terminal processing of the chloroplastic D1 protein of photosystem II. This proteolytic processing is necessary to allow the light-driven assembly of the tetranuclear manganese cluster, which is responsible for photosynthetic water oxidation. This Arabidopsis thaliana (Mouse-ear cress) protein is Carboxyl-terminal-processing peptidase 2, chloroplastic (CTPA2).